A 487-amino-acid chain; its full sequence is Protein nucleotidyltransferase YdiU (487 aa).

8 residues coordinate ATP: Gly86, Gly88, Arg89, Lys109, Asp121, Gly122, Arg172, and Arg179. The Proton acceptor role is filled by Asp248. Asn249 and Asp258 together coordinate Mg(2+). Asp258 lines the ATP pocket.

Belongs to the SELO family. It depends on Mg(2+) as a cofactor. The cofactor is Mn(2+).

It catalyses the reaction L-seryl-[protein] + ATP = 3-O-(5'-adenylyl)-L-seryl-[protein] + diphosphate. It carries out the reaction L-threonyl-[protein] + ATP = 3-O-(5'-adenylyl)-L-threonyl-[protein] + diphosphate. The catalysed reaction is L-tyrosyl-[protein] + ATP = O-(5'-adenylyl)-L-tyrosyl-[protein] + diphosphate. The enzyme catalyses L-histidyl-[protein] + UTP = N(tele)-(5'-uridylyl)-L-histidyl-[protein] + diphosphate. It catalyses the reaction L-seryl-[protein] + UTP = O-(5'-uridylyl)-L-seryl-[protein] + diphosphate. It carries out the reaction L-tyrosyl-[protein] + UTP = O-(5'-uridylyl)-L-tyrosyl-[protein] + diphosphate. In terms of biological role, nucleotidyltransferase involved in the post-translational modification of proteins. It can catalyze the addition of adenosine monophosphate (AMP) or uridine monophosphate (UMP) to a protein, resulting in modifications known as AMPylation and UMPylation. This chain is Protein nucleotidyltransferase YdiU, found in Sphingopyxis alaskensis (strain DSM 13593 / LMG 18877 / RB2256) (Sphingomonas alaskensis).